Here is a 183-residue protein sequence, read N- to C-terminus: Segregation and condensation protein B (183 aa).

The protein belongs to the ScpB family. As to quaternary structure, homodimer. Homodimerization may be required to stabilize the binding of ScpA to the Smc head domains. Component of a cohesin-like complex composed of ScpA, ScpB and the Smc homodimer, in which ScpA and ScpB bind to the head domain of Smc. The presence of the three proteins is required for the association of the complex with DNA.

The protein localises to the cytoplasm. Participates in chromosomal partition during cell division. May act via the formation of a condensin-like complex containing Smc and ScpA that pull DNA away from mid-cell into both cell halves. This is Segregation and condensation protein B from Streptococcus pyogenes serotype M12 (strain MGAS2096).